A 521-amino-acid chain; its full sequence is Small ribosomal subunit protein mL104 (rPPR9) (521 aa).

A mitochondrion-targeting transit peptide spans 1–59; it reads MPPSLPSLQLRRLLLRSFISSSSVNTLQSQPRIISSKPLFSPLPPSRSSIFSTFPSRFF. 8 PPR repeats span residues 174–204, 210–240, 244–278, 279–313, 321–355, 356–390, 393–427, and 428–462; these read GGKTLESAIDRLVRAGRPKQVTDFFEKMEND, DKESLTLVVKKLCEKGHASIAEKMVKNTANE, DENICDLLISGWCIAEKLDEATRLAGEMSRGGFEI, GTKAYNMMLDCVCKLCRKKDPFKLQPEVEKVLLEM, NTETFNVLINNLCKIRRTEEAMTLFGRMGEWGCQP, DAETYLVLIRSLYQAARIGEGDEMIDKMKSAGYGE, NKKEYYGFLKILCGIERLEHAMSVFKSMKANGCKP, and GIKTYDLLMGKMCANNQLTRANGLYKEAAKKGIAV. Positions 480 to 495 are enriched in basic and acidic residues; the sequence is EVDSNVKKRETLPEKT. Residues 480 to 499 form a disordered region; the sequence is EVDSNVKKRETLPEKTARKK. The short motif at 486-503 is the Nuclear localization signal element; the sequence is KKRETLPEKTARKKKRLK.

Belongs to the PPR family. P subfamily. As to quaternary structure, interacts with NAP1;1 and TCP8. Able to bind mitochondrial RNA in vitro. Component of the mitochondrial ribosome small subunit. In terms of tissue distribution, expressed in root tips, lateral root primordia and leaf primordia. Highly detected in the mature pollen grains.

It localises to the mitochondrion matrix. The protein resides in the nucleus. In terms of biological role, RNA-binding protein that functions in both mitochondrion and nucleus. In mitochondrion, it is associated with polysomes and may play a role in translation. Required during embryogenesis. In nucleus, might be involved in the regulation of its own gene expression. This is Small ribosomal subunit protein mL104 (rPPR9) (PNM1) from Arabidopsis thaliana (Mouse-ear cress).